The sequence spans 486 residues: CREB-regulated transcription coactivator 1 homolog (486 aa).

The disordered stretch occupies residues 1–62 (MSNSNTPRKF…APMPIPQQGL (62 aa)). The segment covering 9–23 (KFSEKIAILERKQNE) has biased composition (basic and acidic residues). The span at 34–52 (QVQSITHHPTDSSGSSTAT) shows a compositional bias: polar residues. Ser76 carries the phosphoserine; by AMPK modification. Positions 103–166 (PIQGHRSRSP…PPYNQPGQLV (64 aa)) are disordered. A compositionally biased stretch (pro residues) spans 144-160 (RTPPQHPQYTPYGPPYN). Phosphoserine; by AMPK is present on Ser179. Disordered stretches follow at residues 214–278 (SMPG…QSPN), 327–417 (FNQD…SNSP), and 460–486 (APPQTISNHQTPNNSFHDPGGTQMLQN). 3 stretches are compositionally biased toward polar residues: residues 224–245 (PNSQSQQHSPQLTPQGSQQGSP), 387–402 (PESQSAPTSPHNQLDP), and 461–475 (PPQTISNHQTPNNSF).

Belongs to the TORC family. As to quaternary structure, interacts with crh-1. Post-translationally, phosphorylated by AMPK at Ser-76 and Ser-179. Dephosphorylated by tax-6, the catalytic subunit of calcineurin. Expressed throughout the intestine and in head and tail neurons. Expressed in octopaminergic RIC neurons.

Its subcellular location is the nucleus. The protein resides in the cytoplasm. It localises to the cytosol. Transcriptional coactivator for crh-1, the homolog of vertebrate transcription factor CREB1. Regulates the transcription of metabolic genes and may have a role in mitochondrial dynamics and metabolism. Involved in modulation of lifespan. Through crh-1, counteracts the pro-lifespan-extension signals of AMPK both cell autonomously and, when expressed in neurons, at a systemic level, possibly using the catecholamine analog, octopamine, as a messenger. The sequence is that of CREB-regulated transcription coactivator 1 homolog from Caenorhabditis elegans.